A 649-amino-acid polypeptide reads, in one-letter code: Protein WHI4 (649 aa).

Residues Ser-22 and Ser-206 each carry the phosphoserine modification. Disordered regions lie at residues 196 to 217 and 228 to 247; these read EHVS…SSAQ and ISYG…KPRP. Residues 228 to 238 show a composition bias toward polar residues; the sequence is ISYGKTSSSPL. Phosphoserine is present on residues Ser-258 and Ser-283. Disordered regions lie at residues 438–461 and 604–649; these read LDLN…SIFN and QLPH…YGKS. The region spanning 533-625 is the RRM domain; that stretch reads NTLYVGNLPP…GGIRLSFSKN (93 aa). Residues 631 to 649 show a composition bias toward polar residues; that stretch reads GSNSRSKSGYSFNGSYGKS.

Phosphorylated by PKA in vitro.

The protein resides in the cytoplasm. Has a partially redundant function to WHI3, a dosage-dependent modulator of cell size. The sequence is that of Protein WHI4 (WHI4) from Saccharomyces cerevisiae (strain ATCC 204508 / S288c) (Baker's yeast).